Consider the following 154-residue polypeptide: Nucleoside diphosphate kinase (154 aa).

The ATP site is built by Lys-12, Phe-60, Arg-88, Thr-94, Arg-105, and Asn-115. Residue His-118 is the Pros-phosphohistidine intermediate of the active site.

It belongs to the NDK family. The cofactor is Mg(2+).

The protein localises to the cytoplasm. It carries out the reaction a 2'-deoxyribonucleoside 5'-diphosphate + ATP = a 2'-deoxyribonucleoside 5'-triphosphate + ADP. The enzyme catalyses a ribonucleoside 5'-diphosphate + ATP = a ribonucleoside 5'-triphosphate + ADP. In terms of biological role, major role in the synthesis of nucleoside triphosphates other than ATP. The ATP gamma phosphate is transferred to the NDP beta phosphate via a ping-pong mechanism, using a phosphorylated active-site intermediate. The protein is Nucleoside diphosphate kinase of Haloarcula marismortui (strain ATCC 43049 / DSM 3752 / JCM 8966 / VKM B-1809) (Halobacterium marismortui).